A 280-amino-acid polypeptide reads, in one-letter code: Acetyl-coenzyme A carboxylase carboxyl transferase subunit beta (280 aa).

The region spanning 25-280 is the CoA carboxyltransferase N-terminal domain; that stretch reads VMRECPICHA…RLHTKENAYG (256 aa). The Zn(2+) site is built by Cys-29, Cys-32, Cys-47, and Cys-50. The C4-type zinc finger occupies 29–50; the sequence is CPICHAKFLSMRLGRDHTCPKC.

The protein belongs to the AccD/PCCB family. As to quaternary structure, acetyl-CoA carboxylase is a heterohexamer composed of biotin carboxyl carrier protein (AccB), biotin carboxylase (AccC) and two subunits each of ACCase subunit alpha (AccA) and ACCase subunit beta (AccD). Zn(2+) serves as cofactor.

The protein resides in the cytoplasm. It carries out the reaction N(6)-carboxybiotinyl-L-lysyl-[protein] + acetyl-CoA = N(6)-biotinyl-L-lysyl-[protein] + malonyl-CoA. It functions in the pathway lipid metabolism; malonyl-CoA biosynthesis; malonyl-CoA from acetyl-CoA: step 1/1. Its function is as follows. Component of the acetyl coenzyme A carboxylase (ACC) complex. Biotin carboxylase (BC) catalyzes the carboxylation of biotin on its carrier protein (BCCP) and then the CO(2) group is transferred by the transcarboxylase to acetyl-CoA to form malonyl-CoA. The polypeptide is Acetyl-coenzyme A carboxylase carboxyl transferase subunit beta (Lactobacillus helveticus (strain DPC 4571)).